The following is a 130-amino-acid chain: Lysozyme C, kidney isozyme (130 aa).

A C-type lysozyme domain is found at 1–130 (KVFERCELAR…LTSYIQGCGV (130 aa)). Intrachain disulfides connect C6–C128, C30–C116, C65–C81, and C77–C95. Residues E35 and D53 contribute to the active site.

This sequence belongs to the glycosyl hydrolase 22 family. In terms of assembly, monomer.

It is found in the secreted. The catalysed reaction is Hydrolysis of (1-&gt;4)-beta-linkages between N-acetylmuramic acid and N-acetyl-D-glucosamine residues in a peptidoglycan and between N-acetyl-D-glucosamine residues in chitodextrins.. In terms of biological role, lysozymes have primarily a bacteriolytic function; those in tissues and body fluids are associated with the monocyte-macrophage system and enhance the activity of immunoagents. The protein is Lysozyme C, kidney isozyme of Ovis aries (Sheep).